The following is a 105-amino-acid chain: Small ribosomal subunit protein uS10 (105 aa).

The protein belongs to the universal ribosomal protein uS10 family. As to quaternary structure, part of the 30S ribosomal subunit.

In terms of biological role, involved in the binding of tRNA to the ribosomes. The chain is Small ribosomal subunit protein uS10 from Agathobacter rectalis (strain ATCC 33656 / DSM 3377 / JCM 17463 / KCTC 5835 / VPI 0990) (Eubacterium rectale).